The sequence spans 596 residues: UvrABC system protein C (596 aa).

Positions 16–95 constitute a GIY-YIG domain; sequence SSPGVYRFYS…IKENKPKYNV (80 aa). The UVR domain maps to 209–244; it reads SSVKKYYQEKMLSAAEDMQFEKAQFFKERYNSVLGL.

Belongs to the UvrC family. In terms of assembly, interacts with UvrB in an incision complex.

Its subcellular location is the cytoplasm. The UvrABC repair system catalyzes the recognition and processing of DNA lesions. UvrC both incises the 5' and 3' sides of the lesion. The N-terminal half is responsible for the 3' incision and the C-terminal half is responsible for the 5' incision. The chain is UvrABC system protein C from Cytophaga hutchinsonii (strain ATCC 33406 / DSM 1761 / CIP 103989 / NBRC 15051 / NCIMB 9469 / D465).